The primary structure comprises 235 residues: Ubiquinone/menaquinone biosynthesis C-methyltransferase UbiE (235 aa).

Residues T59, D84, and S123 each contribute to the S-adenosyl-L-methionine site.

Belongs to the class I-like SAM-binding methyltransferase superfamily. MenG/UbiE family.

The catalysed reaction is a 2-demethylmenaquinol + S-adenosyl-L-methionine = a menaquinol + S-adenosyl-L-homocysteine + H(+). It carries out the reaction a 2-methoxy-6-(all-trans-polyprenyl)benzene-1,4-diol + S-adenosyl-L-methionine = a 5-methoxy-2-methyl-3-(all-trans-polyprenyl)benzene-1,4-diol + S-adenosyl-L-homocysteine + H(+). It participates in quinol/quinone metabolism; menaquinone biosynthesis; menaquinol from 1,4-dihydroxy-2-naphthoate: step 2/2. It functions in the pathway cofactor biosynthesis; ubiquinone biosynthesis. Methyltransferase required for the conversion of demethylmenaquinol (DMKH2) to menaquinol (MKH2) and the conversion of 2-polyprenyl-6-methoxy-1,4-benzoquinol (DDMQH2) to 2-polyprenyl-3-methyl-6-methoxy-1,4-benzoquinol (DMQH2). In Campylobacter jejuni subsp. jejuni serotype O:6 (strain 81116 / NCTC 11828), this protein is Ubiquinone/menaquinone biosynthesis C-methyltransferase UbiE.